A 274-amino-acid chain; its full sequence is Type III pantothenate kinase (274 aa).

ATP is bound at residue 6–13; the sequence is DVGNTNTV. Substrate contacts are provided by residues Y110 and 117 to 120; that span reads GADR. D119 serves as the catalytic Proton acceptor. D139 provides a ligand contact to K(+). Residue T142 coordinates ATP. T194 is a binding site for substrate.

The protein belongs to the type III pantothenate kinase family. As to quaternary structure, homodimer. It depends on NH4(+) as a cofactor. K(+) serves as cofactor.

The protein resides in the cytoplasm. The enzyme catalyses (R)-pantothenate + ATP = (R)-4'-phosphopantothenate + ADP + H(+). The protein operates within cofactor biosynthesis; coenzyme A biosynthesis; CoA from (R)-pantothenate: step 1/5. In terms of biological role, catalyzes the phosphorylation of pantothenate (Pan), the first step in CoA biosynthesis. The protein is Type III pantothenate kinase of Koribacter versatilis (strain Ellin345).